A 579-amino-acid chain; its full sequence is MQSWNSQSFLSSHFTMLRYACKRAVPRLNAASGLRFQSSKPADGPETVFTSLNEENDPNRDAFFKYTWGTWLKNNEAERAKRETRFSIEGLAEVIKSLPQSGKAPIEAETEIKVTQLASLHEGKHHRVYRVDVDDGKQYVLRIPYGLGSELFRKKRIQSEVATMDFVREKVANNKFIVPEVYSWNATVDNPLDTQYTLMDYFAGRDTLMKHWNPVAQEMTERAAKIKPVVDIYSALLQPEFTRYGSLYFTEDVSSKDASVLAYKGAENDKKELADRWRIGPTTESRFWKNSLPEDSPLRGPWETAEEYIEATAAINLHNLAELAKNGDRNPAVVAAATATYEKYQQLASQLLLRPEVENDNLFSARMGFGDLHPINVLVEGQKDIAESSLALVDFENTSIKPALLIGTPDYVRYGGLKLFKTEDIPNYDQLSDQEKAQVNYMIAQTQNAFTFEFLLNNEAPEFINSFSPRVKRLSEPVRLALNPLYLEDHLDLSEEMIKLQQDWTPIMGMEREFPVHWTNEEYEKQAKDFAEWNQKAMSTPFFQTKGWVPQDMFEQLFGNGLLDKTESGDYVYVPPKKE.

Residues 1-36 constitute a mitochondrion transit peptide; sequence MQSWNSQSFLSSHFTMLRYACKRAVPRLNAASGLRF.

Belongs to the AIM9 family.

Its subcellular location is the mitochondrion. In Yarrowia lipolytica (strain CLIB 122 / E 150) (Yeast), this protein is Altered inheritance of mitochondria protein 9, mitochondrial (AIM9).